Consider the following 63-residue polypeptide: Large ribosomal subunit protein uL29 (63 aa).

This sequence belongs to the universal ribosomal protein uL29 family.

The protein is Large ribosomal subunit protein uL29 of Actinobacillus pleuropneumoniae serotype 5b (strain L20).